The sequence spans 304 residues: Homoserine kinase (304 aa).

Residue 92 to 102 (PLARGLGSSAT) coordinates ATP.

This sequence belongs to the GHMP kinase family. Homoserine kinase subfamily.

Its subcellular location is the cytoplasm. The catalysed reaction is L-homoserine + ATP = O-phospho-L-homoserine + ADP + H(+). Its pathway is amino-acid biosynthesis; L-threonine biosynthesis; L-threonine from L-aspartate: step 4/5. Functionally, catalyzes the ATP-dependent phosphorylation of L-homoserine to L-homoserine phosphate. This chain is Homoserine kinase, found in Nostoc punctiforme (strain ATCC 29133 / PCC 73102).